A 622-amino-acid polypeptide reads, in one-letter code: MDNKKIVLLIIFSTSLLFLWDAWVKEQEKFNAPPSVVAQANSAAGVTQSKNNDGLPIPGSELTASQTGSDLNGIPSSGDTADSVTPRLLPSGEQIRVVTDKVIAEIDTMGGDLRRLELLQQPSPEDENVPYSLLHSEASRTYVAQSGLVGEGLPNHKTVYQVESGIRNYELTAGEDKVVIRLLAPETQGVQVIKTYTFHRDSYVIDIGFEIANKSDATIRPFAYFQMLRDDTPPPAHTMMIRSFLGAAVYTDEEKYQKIPFDDLDKGKTDYPANANNGWIAMLEHYFLTAWLPPQQTPREYFAKRQSDNLYTAGVIVPAGVITAGETVTTTMPLYAGPEEQDRLAELAPGLELTVDYGWLTMIAKPLFRLLSFYHSWTGNWGIAIILLTITVKLLFFPLSAAGYRSMAKLRLVTPKLKRIQDQYKGDRQRMHQAMMDFYKTEKINPMGGCFPILVQIPVFIALYWTILAAVELRYAPFALWITDLSSPDPKYLLPVLLGISMFIQTRLNPTPTDPIQAKIMQIMPVAFSAIFFFFPAGLVLYSLVNNILSIAQQWKITKMYGTAPSQDAPESPASKDAPELPVSNQVINDSENTEAPASGPADSPKKPVNIPRRMHKRTRKK.

A helical transmembrane segment spans residues isoleucine 6–glutamate 26. A disordered region spans residues threonine 47–arginine 87. Residues leucine 62–serine 83 show a composition bias toward polar residues. Transmembrane regions (helical) follow at residues tryptophan 381–alanine 401, phenylalanine 451–valine 471, and proline 525–valine 545. The interval threonine 563–lysine 622 is disordered. Residues valine 583–alanine 596 show a composition bias toward polar residues. A compositionally biased stretch (basic residues) spans arginine 613 to lysine 622.

The protein belongs to the OXA1/ALB3/YidC family. Type 1 subfamily. In terms of assembly, interacts with the Sec translocase complex via SecD. Specifically interacts with transmembrane segments of nascent integral membrane proteins during membrane integration.

It localises to the cell inner membrane. Required for the insertion and/or proper folding and/or complex formation of integral membrane proteins into the membrane. Involved in integration of membrane proteins that insert both dependently and independently of the Sec translocase complex, as well as at least some lipoproteins. Aids folding of multispanning membrane proteins. The sequence is that of Membrane protein insertase YidC from Nitrosomonas eutropha (strain DSM 101675 / C91 / Nm57).